The chain runs to 151 residues: Deazaflavin-dependent nitroreductase (151 aa).

Coenzyme F420-(gamma-Glu)n is bound by residues 54-56, 60-65, 76-79, 87-91, and Y133; these read RKT, RVNPLY, AASK, and MWYLN.

The protein belongs to the F420H(2)-dependent quinone reductase family.

It is found in the cell membrane. The catalysed reaction is oxidized coenzyme F420-(gamma-L-Glu)(n) + a quinol + H(+) = reduced coenzyme F420-(gamma-L-Glu)(n) + a quinone. Involved in a F420-dependent anti-oxidant mechanism that protects M.tuberculosis against oxidative stress and bactericidal agents. Catalyzes the F420H(2)-dependent two-electron reduction of quinones to dihydroquinones, thereby preventing the formation of cytotoxic semiquinones obtained by the one-electron reduction pathway. In vitro, catalyzes the reduction of both benzoquinone and naphthoquinone analogs; since menaquinone is the sole quinone electron carrier in the respiratory chain in M.tuberculosis, the physiological electron acceptor for Fqr-mediated F420H(2) oxidation is therefore likely to be the endogenous menaquinone found in the membrane fraction of M.tuberculosis. Is able to use F420 species with two and five glutamate residues in its polyglutamate tail. Cannot use NADH or NADPH instead of F420H(2) as the electron donor. Functionally, is involved in the bioreductive activation of bicyclic 4-nitroimidazole prodrugs such as PA-824 and delamanid developed for anti-tuberculosis therapy against both replicating and persistent bacteria. It converts PA-824 into three primary metabolites resulting from reduction of the imidazole ring at C-3; the major one is the corresponding des-nitroimidazole that generates lethal reactive nitrogen species, including nitric oxide (NO), which appears to be responsible for the anaerobic killing activity. Ddn uses the reduced F420 produced by FGD1 to activate PA-824. Delamanid (OPC-67683) is also reduced by Ddn to its des-nitro form. This chain is Deazaflavin-dependent nitroreductase (ddn), found in Mycobacterium tuberculosis (strain CDC 1551 / Oshkosh).